The primary structure comprises 215 residues: L-fuculose phosphate aldolase (215 aa).

Substrate is bound by residues 28–29 (GN), 43–44 (TG), and 71–72 (SS). E73 acts as the Proton donor/acceptor in catalysis. Positions 73, 92, 94, and 155 each coordinate Zn(2+).

Belongs to the aldolase class II family. AraD/FucA subfamily. As to quaternary structure, homotetramer. Requires Zn(2+) as cofactor.

The catalysed reaction is L-fuculose 1-phosphate = (S)-lactaldehyde + dihydroxyacetone phosphate. The protein operates within carbohydrate degradation; L-fucose degradation; L-lactaldehyde and glycerone phosphate from L-fucose: step 3/3. In terms of biological role, involved in the degradation of L-fucose and D-arabinose. Catalyzes the reversible cleavage of L-fuculose 1-phosphate (Fuc1P) to yield dihydroxyacetone phosphate (DHAP) and L-lactaldehyde. This Escherichia coli O157:H7 protein is L-fuculose phosphate aldolase.